The chain runs to 442 residues: Ribulose bisphosphate carboxylase/oxygenase activase 1, chloroplastic (442 aa).

A chloroplast-targeting transit peptide spans 1-58 (MATSVSTIGAVNKTPLSLNNSVAGTSVPSTAFFGKTLKKVYGKGVSSPKVTNKSLRIV). Residue 169–176 (GGKGQGKS) coordinates ATP.

The protein belongs to the RuBisCO activase family.

It localises to the plastid. The protein resides in the chloroplast stroma. Activation of RuBisCO (ribulose-1,5-bisphosphate carboxylase/oxygenase; EC 4.1.1.39) involves the ATP-dependent carboxylation of the epsilon-amino group of lysine leading to a carbamate structure. This is Ribulose bisphosphate carboxylase/oxygenase activase 1, chloroplastic from Nicotiana tabacum (Common tobacco).